A 117-amino-acid chain; its full sequence is MKVFLGLLLGYSTILILTYQSPATQWCFYEISLKIPNHHSMECSYPRLYKHFMFMKKWRDKNWSIIIRYYCFYLVFSFAFAGCIAFAICKNLRLCTTMKLLMLLSILVLLSQPILNN.

A helical transmembrane segment spans residues 3-23 (VFLGLLLGYSTILILTYQSPA). A glycan (N-linked (GlcNAc...) asparagine; by host) is linked at asparagine 62. A run of 2 helical transmembrane segments spans residues 69 to 89 (YYCF…FAIC) and 94 to 114 (LCTT…SQPI).

It belongs to the asfivirus MGF 110 family.

Its subcellular location is the host membrane. Functionally, plays a role in virus cell tropism, and may be required for efficient virus replication in macrophages. The polypeptide is Protein MGF 110-11L (African swine fever virus (isolate Warthog/Namibia/Wart80/1980) (ASFV)).